The following is a 583-amino-acid chain: Proteasome-associated ATPase (583 aa).

A coiled-coil region spans residues 2–90 (ASREDRDAAN…REEVDRLAQP (89 aa)). 271 to 276 (GCGKTL) is an ATP binding site. The interval 582-583 (YL) is docks into pockets in the proteasome alpha-ring.

Belongs to the AAA ATPase family. As to quaternary structure, homohexamer. Assembles into a hexameric ring structure that caps the 20S proteasome core. Strongly interacts with the prokaryotic ubiquitin-like protein Pup through a hydrophobic interface; the interacting region of ARC lies in its N-terminal coiled-coil domain. There is one Pup binding site per ARC hexamer ring. Upon ATP-binding, the C-terminus of ARC interacts with the alpha-rings of the proteasome core, possibly by binding to the intersubunit pockets.

It participates in protein degradation; proteasomal Pup-dependent pathway. ATPase which is responsible for recognizing, binding, unfolding and translocation of pupylated proteins into the bacterial 20S proteasome core particle. May be essential for opening the gate of the 20S proteasome via an interaction with its C-terminus, thereby allowing substrate entry and access to the site of proteolysis. Thus, the C-termini of the proteasomal ATPase may function like a 'key in a lock' to induce gate opening and therefore regulate proteolysis. The sequence is that of Proteasome-associated ATPase from Acidothermus cellulolyticus (strain ATCC 43068 / DSM 8971 / 11B).